The sequence spans 160 residues: FMRFamide-like neuropeptides 13 (160 aa).

The first 17 residues, 1 to 17 (MMTSLLTISMFVVAIQA), serve as a signal peptide directing secretion. A propeptide spanning residues 18 to 43 (FDSSEIRMLDEQYDTKNPFFQFLENS) is cleaved from the precursor. A phenylalanine amide mark is found at F60, F73, F85, F98, F110, F123, F135, F146, and F157.

It belongs to the FARP (FMRFamide related peptide) family. Expressed in the ASE sensory neurons, the DD motor neurons, the 15, M3 and M5 cholinergic pharyngeal motoneurons, and the ASG, ASK and BAG neurons.

The protein localises to the secreted. Functionally, probable FMRFamide-like neuropeptides. Binds to neuronal receptors such as dmsr-1 to promote sleep in response to cellular stress also known as stress-induced sleep (SIS). Plays a role in behaviors associated with SIS, acting in concert with the FMRFamide related peptide, flp-24 and neuropeptide-like protein nlp-8. Its function is as follows. AADGAPLIRF-amide: Inhibits muscle tension in somatic muscle. Acts as a ligand for the npr-22 receptor in vitro. Acts as a ligand for isoform a of the dmsr-1 G-protein coupled receptor in vitro. In terms of biological role, APEASPFIRF-amide: Inhibits muscle tension in somatic muscle. Potent inhibitor of the activity of the dissected pharyngeal myogenic muscle system. Acts as a ligand for isoform a of the dmsr-1 G-protein coupled receptor in vitro. Acts as a ligand for the npr-22 receptor in vitro. Acts as a ligand for isoform a of the dmsr-1 G-protein coupled receptor in vitro. Functionally, acts as a ligand for isoform a of the dmsr-1 G-protein coupled receptor in vitro. This is FMRFamide-like neuropeptides 13 from Caenorhabditis elegans.